The sequence spans 422 residues: Adhesin YadA (422 aa).

An N-terminal signal peptide occupies residues 1-25; it reads MTKDFKISVSAALISALFSSPYAFA. Positions 26–330 are surface exposed passenger domain; that stretch reads NNDEVHFTAV…KKAIRESNQY (305 aa). Residues 216-362 are a coiled coil; sequence EKTQENANKK…LASSAALNSL (147 aa). The tract at residues 331-369 is outer membrane translocation of the passenger domain; that stretch reads TDHKFHQLDNRLDKLDTRVDKGLASSAALNSLFQPYGVG. The next 4 beta stranded transmembrane spans lie at 369–379, 383–394, 401–407, and 411–422; these read GKVNFTAGVGG, SQALAIGSGYRV, KAGVAYA, and DVMYNASFNIEW. Residues 370 to 422 form a translocator domain region; it reads KVNFTAGVGGYRSSQALAIGSGYRVNESVALKAGVAYAGSSDVMYNASFNIEW.

It belongs to the autotransporter-2 (AT-2) (TC 1.B.40) family. As to quaternary structure, homotrimer.

The protein localises to the cell surface. It is found in the cell outer membrane. In terms of biological role, collagen-binding outer membrane protein forming a fibrillar matrix on the bacterial cell surface. Promotes initial attachment and invasion of eukaryotic cells. Also protects the bacteria by being responsible for agglutination, serum resistance, complement inactivation and phagocytosis resistance. This Yersinia enterocolitica protein is Adhesin YadA (yadA).